Consider the following 100-residue polypeptide: Urease subunit gamma (100 aa).

Belongs to the urease gamma subunit family. As to quaternary structure, heterotrimer of UreA (gamma), UreB (beta) and UreC (alpha) subunits. Three heterotrimers associate to form the active enzyme.

It is found in the cytoplasm. It carries out the reaction urea + 2 H2O + H(+) = hydrogencarbonate + 2 NH4(+). Its pathway is nitrogen metabolism; urea degradation; CO(2) and NH(3) from urea (urease route): step 1/1. The chain is Urease subunit gamma from Dinoroseobacter shibae (strain DSM 16493 / NCIMB 14021 / DFL 12).